A 237-amino-acid polypeptide reads, in one-letter code: 3-oxoacyl-[acyl-carrier-protein] reductase (237 aa).

An N-acetylmethionine modification is found at methionine 1. NADP(+) is bound by residues 11-14, 34-35, aspartate 56, and 83-85; these read SRGI, RN, and AAG. Substrate is bound at residue serine 135. NADP(+) contacts are provided by residues tyrosine 148, lysine 152, and 181–183; that span reads IHT. Tyrosine 148 (proton acceptor) is an active-site residue. Position 195 is an N6-acetyllysine (lysine 195).

It belongs to the short-chain dehydrogenases/reductases (SDR) family. In terms of assembly, homotetramer (in vitro). Heterotetramer with HSD17B8; contains two molecules each of HSD17B8 and CBR4. Does not form homotetramers when HSD17B8 is coexpressed, only heterotetramers (in vitro).

The protein localises to the mitochondrion matrix. The enzyme catalyses a (3R)-hydroxyacyl-[ACP] + NADP(+) = a 3-oxoacyl-[ACP] + NADPH + H(+). It carries out the reaction a quinone + NADPH + H(+) = a quinol + NADP(+). Its pathway is lipid metabolism; fatty acid biosynthesis. In terms of biological role, component of the heterotetramer complex KAR (3-ketoacyl-[acyl carrier protein] reductase or 3-ketoacyl-[ACP] reductase) that forms part of the mitochondrial fatty acid synthase (mtFAS). Beta-subunit of the KAR heterotetramer complex, responsible for the 3-ketoacyl-ACP reductase activity of the mtFAS, reduces 3-oxoacyl-[ACP] to (3R)-hydroxyacyl-[ACP] in a NADPH-dependent manner with no chain length preference, thereby participating in mitochondrial fatty acid biosynthesis. The homotetramer has NADPH-dependent quinone reductase activity (in vitro), hence could play a role in protection against cytotoxicity of exogenous quinones. As a heterotetramer, it can also reduce 9,10-phenanthrenequinone, 1,4-benzoquinone and various other o-quinones and p-quinones (in vitro). In Bos taurus (Bovine), this protein is 3-oxoacyl-[acyl-carrier-protein] reductase (CBR4).